We begin with the raw amino-acid sequence, 968 residues long: RNA polymerase-associated protein RapA (968 aa).

The Helicase ATP-binding domain maps to 164 to 334 (DVGRRHAPRV…FARLRLLDPN (171 aa)). Position 177-184 (177-184 (DEVGLGKT)) interacts with ATP. The DEAH box motif lies at 280 to 283 (DEAH). The 196-residue stretch at 490–685 (RVEWLMGYLT…ALKAQLEQGR (196 aa)) folds into the Helicase C-terminal domain.

The protein belongs to the SNF2/RAD54 helicase family. RapA subfamily. Interacts with the RNAP. Has a higher affinity for the core RNAP than for the holoenzyme. Its ATPase activity is stimulated by binding to RNAP.

Functionally, transcription regulator that activates transcription by stimulating RNA polymerase (RNAP) recycling in case of stress conditions such as supercoiled DNA or high salt concentrations. Probably acts by releasing the RNAP, when it is trapped or immobilized on tightly supercoiled DNA. Does not activate transcription on linear DNA. Probably not involved in DNA repair. This chain is RNA polymerase-associated protein RapA, found in Salmonella schwarzengrund (strain CVM19633).